We begin with the raw amino-acid sequence, 585 residues long: Staphyloferrin A synthase (585 aa).

The protein belongs to the IucA/IucC family.

The catalysed reaction is N(5)-[(S)-citryl]-D-ornithine + citrate + ATP = staphyloferrin A + AMP + diphosphate + H(+). It participates in siderophore biosynthesis. Its function is as follows. Involved in the biosynthesis of the siderophore staphyloferrin A. Catalyzes the ATP-dependent condensation of a citryl-D-ornithine intermediate, produced by SfnaD, and citrate to form staphyloferrin A. This chain is Staphyloferrin A synthase, found in Staphylococcus aureus (strain NCTC 8325 / PS 47).